A 165-amino-acid polypeptide reads, in one-letter code: Regulator of ribonuclease activity A (165 aa).

This sequence belongs to the RraA family. Homotrimer. Binds to both RNA-binding sites in the C-terminal region of Rne and to RhlB.

The protein localises to the cytoplasm. Globally modulates RNA abundance by binding to RNase E (Rne) and regulating its endonucleolytic activity. Can modulate Rne action in a substrate-dependent manner by altering the composition of the degradosome. Modulates RNA-binding and helicase activities of the degradosome. The chain is Regulator of ribonuclease activity A from Pseudoalteromonas translucida (strain TAC 125).